The primary structure comprises 369 residues: UDP-N-acetylglucosamine--N-acetylmuramyl-(pentapeptide) pyrophosphoryl-undecaprenol N-acetylglucosamine transferase (369 aa).

UDP-N-acetyl-alpha-D-glucosamine contacts are provided by residues 10–12, Asn-124, Arg-166, Ser-196, and Gln-300; that span reads TGG.

The protein belongs to the glycosyltransferase 28 family. MurG subfamily.

The protein resides in the cell membrane. It carries out the reaction di-trans,octa-cis-undecaprenyl diphospho-N-acetyl-alpha-D-muramoyl-L-alanyl-D-glutamyl-meso-2,6-diaminopimeloyl-D-alanyl-D-alanine + UDP-N-acetyl-alpha-D-glucosamine = di-trans,octa-cis-undecaprenyl diphospho-[N-acetyl-alpha-D-glucosaminyl-(1-&gt;4)]-N-acetyl-alpha-D-muramoyl-L-alanyl-D-glutamyl-meso-2,6-diaminopimeloyl-D-alanyl-D-alanine + UDP + H(+). Its pathway is cell wall biogenesis; peptidoglycan biosynthesis. Its function is as follows. Cell wall formation. Catalyzes the transfer of a GlcNAc subunit on undecaprenyl-pyrophosphoryl-MurNAc-pentapeptide (lipid intermediate I) to form undecaprenyl-pyrophosphoryl-MurNAc-(pentapeptide)GlcNAc (lipid intermediate II). This Desulfitobacterium hafniense (strain DSM 10664 / DCB-2) protein is UDP-N-acetylglucosamine--N-acetylmuramyl-(pentapeptide) pyrophosphoryl-undecaprenol N-acetylglucosamine transferase.